The following is a 152-amino-acid chain: UPF0266 membrane protein YobD (152 aa).

Topologically, residues 1–5 (MTITD) are periplasmic. A helical membrane pass occupies residues 6 to 26 (LVLILFIAALLAYALYDQFIM). The Cytoplasmic segment spans residues 27-44 (PRRNGPTLLSIALLRRGR). Residues 45-65 (IDSVIFVGLVAILIYNNVTSH) form a helical membrane-spanning segment. G66 is a topological domain (periplasmic). Residues 67–87 (AQMTTWLLSALALMGFYIFWI) traverse the membrane as a helical segment. Residues 88–152 (RTPRIIFKQR…KIYKLLIENQ (65 aa)) are Cytoplasmic-facing.

Belongs to the UPF0266 family.

Its subcellular location is the cell inner membrane. This Salmonella typhi protein is UPF0266 membrane protein YobD (yobD).